The following is a 343-amino-acid chain: Dihydroorotase (343 aa).

Zn(2+)-binding residues include His-13 and His-15. Residues 15–17 (HLR) and Asn-41 contribute to the substrate site. Zn(2+) is bound by residues Lys-99, His-136, and His-174. An N6-carboxylysine modification is found at Lys-99. Position 136 (His-136) interacts with substrate. Leu-219 contacts substrate. A Zn(2+)-binding site is contributed by Asp-247. The active site involves Asp-247. His-251 and Ala-263 together coordinate substrate.

The protein belongs to the metallo-dependent hydrolases superfamily. DHOase family. Class II DHOase subfamily. Homodimer. It depends on Zn(2+) as a cofactor.

It catalyses the reaction (S)-dihydroorotate + H2O = N-carbamoyl-L-aspartate + H(+). It functions in the pathway pyrimidine metabolism; UMP biosynthesis via de novo pathway; (S)-dihydroorotate from bicarbonate: step 3/3. Catalyzes the reversible cyclization of carbamoyl aspartate to dihydroorotate. The sequence is that of Dihydroorotase from Alkalilimnicola ehrlichii (strain ATCC BAA-1101 / DSM 17681 / MLHE-1).